Here is a 362-residue protein sequence, read N- to C-terminus: Putative gustatory receptor 89a (362 aa).

Over 1 to 38 the chain is Cytoplasmic; sequence MLRFPHVCGLCLLLKYWQILALAPFRTSEPMVARCQRW. The helical transmembrane segment at 39–59 threads the bilayer; sequence MTLIAVFRWLLLTSMAPFVLW. The Extracellular portion of the chain corresponds to 60-74; the sequence is KSAAMYEATNVRHSM. The helical transmembrane segment at 75–95 threads the bilayer; it reads VFKTIALATMTGDVCISLALL. At 96–126 the chain is on the cytoplasmic side; sequence GNHLWNRRELANLVNDLARLHRRRRLSWWST. Residues 127–147 traverse the membrane as a helical segment; it reads LFLWLKLLLSLYDLLCSVPFL. Topologically, residues 148–166 are extracellular; it reads KGAGGRLPWSQLVAYGVQL. The helical transmembrane segment at 167–187 threads the bilayer; that stretch reads YFQHVASVYGNGIFGGILLML. Residues 188–223 are Cytoplasmic-facing; it reads ECYNQLEREEPTNLARLLQKEYSWLRLIQRFVKLFQ. Residues 224-244 form a helical membrane-spanning segment; that stretch reads LGIFLLVLGSFVNIMVNIYAF. Residues 245–255 lie on the Extracellular side of the membrane; it reads MSYYVSLHGVP. Residues 256–276 form a helical membrane-spanning segment; sequence LTISNNCLVLAIQLYAVILAA. Over 277 to 333 the chain is Cytoplasmic; the sequence is HLCQVRSAKLRKKCLQLEYVPEGLTQEQAMASTPFPVLTPTGNVKFRILGVFILDNS. The chain crosses the membrane as a helical span at residues 334–354; it reads FWLFLVSYAMNFIVVILQTSF. The Extracellular segment spans residues 355 to 362; it reads EHINHGEI.

The protein belongs to the insect chemoreceptor superfamily. Gustatory receptor (GR) family. Gr77a subfamily.

It is found in the cell membrane. In terms of biological role, probable gustatory receptor which mediates acceptance or avoidance behavior, depending on its substrates. In Drosophila melanogaster (Fruit fly), this protein is Putative gustatory receptor 89a (Gr89a).